The sequence spans 146 residues: MTLKLHNLRPAPGAKTAKTRVGRGEGSKGKTAGRGTKGTKARYQVPAAFEGGQMPIHMRLPKLKGFKNPFKVEFQVVNLDRINQLFPEGGAVGVEDLVAKGAVRDGHPVKVLGQGEISVAVQVSANAFSATASEKIEAAGGTTTLV.

The disordered stretch occupies residues 1 to 39 (MTLKLHNLRPAPGAKTAKTRVGRGEGSKGKTAGRGTKGT).

Belongs to the universal ribosomal protein uL15 family. Part of the 50S ribosomal subunit.

In terms of biological role, binds to the 23S rRNA. This Nocardioides sp. (strain ATCC BAA-499 / JS614) protein is Large ribosomal subunit protein uL15.